Reading from the N-terminus, the 101-residue chain is Small ribosomal subunit protein uS14 (101 aa).

The protein belongs to the universal ribosomal protein uS14 family. In terms of assembly, part of the 30S ribosomal subunit. Contacts proteins S3 and S10.

In terms of biological role, binds 16S rRNA, required for the assembly of 30S particles and may also be responsible for determining the conformation of the 16S rRNA at the A site. The polypeptide is Small ribosomal subunit protein uS14 (Francisella tularensis subsp. tularensis (strain FSC 198)).